Consider the following 478-residue polypeptide: Odorant receptor coreceptor (478 aa).

The Cytoplasmic segment spans residues 1–41 (MQVQPTKYVGLVADLMPNIRLMQASGHFLFRYVTGPILIRK). The chain crosses the membrane as a helical span at residues 42–62 (VYSWWTLAMVLIQFFAILGNL). Residues 63–73 (ATNADDVNELT) are Extracellular-facing. A helical transmembrane segment spans residues 74 to 94 (ANTITTLFFTHSVTKFIYFAV). The Cytoplasmic portion of the chain corresponds to 95 to 133 (NSENFYRTLAIWNQTNTHPLFAESDARYHSIALAKMRKL). The chain crosses the membrane as a helical span at residues 134 to 154 (LVLVMATTVLSVVAWVTITFF). Residues 155-188 (GESVKTVLDKATNETYTVDIPRLPIKSWYPWNAM) are Extracellular-facing. N167 is a glycosylation site (N-linked (GlcNAc...) asparagine). A helical membrane pass occupies residues 189–209 (SGPAYIFSFIYQIYFLLFSMV). Residues 210 to 338 (QSNLADVMFC…AIKYWVERHK (129 aa)) are Cytoplasmic-facing. A helical transmembrane segment spans residues 339–361 (HVVRLVSAIGDTYGPALLLHMLT). Over 362–382 (STIKLTLLAYQATKIDGVNVY) the chain is Extracellular. A helical membrane pass occupies residues 383 to 403 (GLTVIGYLCYALAQVFLFCIF). Topologically, residues 404 to 454 (GNRLIEESSSVMEAAYSCHWYDGSEEAKTFVQIVCQQCQKAMTISGAKFFT) are cytoplasmic. A helical membrane pass occupies residues 455–475 (VSLDLFASVLGAVVTYFMVLV). At 476 to 478 (QLK) the chain is on the extracellular side.

It belongs to the insect chemoreceptor superfamily. Heteromeric odorant receptor channel (TC 1.A.69) family. Orco subfamily. Heterodimer with conventional odorant receptors (ORs). Complexes exist early in the endomembrane system in olfactory sensory neurons (OSNs), coupling these complexes to the conserved ciliary trafficking pathway. As to expression, expressed in olfactory and gustatory organs of both adult and immature stages. Highest expression is seen in adult antennae and the maxillary palps. Lower expression also seen in proboscis and legs. Within the antenna, expression originates in cell bodies and projects into the lumen of an individual sensillum, presumably along the dendritic extension of the neuron. Within the maxillary palps, expression is seen in a small number of cell bodies and in projections into the sensillar cone. Within the probiscus, expression is seen in a single type of sensillum on the outer surface of the labellar lobes.

The protein localises to the cell membrane. Functionally, odorant coreceptor which complexes with conventional odorant receptors (ORs) to form odorant-sensing units, providing sensitive and prolonged odorant signaling and calcium permeability. Orco is a universal and integral part of the functional odorant receptor, involved in the dendritic localization of other olfactory receptors. Can form functional ion channels in the absence of an odor-binding OR. Plays a key role in preferred attraction of females for humans over non-human hosts for blood feeding. Human attraction plays a crucial role in the transmission of Plasmodium protozoans by the mosquito leading to infection diseases like malaria. Also required for the response to N,N-Diethyl-meta-toluamide (DEET), the most widely used insect repellent worldwide. This is Odorant receptor coreceptor (Orco) from Anopheles gambiae (African malaria mosquito).